A 161-amino-acid polypeptide reads, in one-letter code: Nucleotide-binding protein LHK_01423 (161 aa).

This sequence belongs to the YajQ family.

Its function is as follows. Nucleotide-binding protein. The protein is Nucleotide-binding protein LHK_01423 of Laribacter hongkongensis (strain HLHK9).